The following is a 338-amino-acid chain: tRNA (cytosine(34)-C(5))-methyltransferase, mitochondrial (338 aa).

Residues 140 to 146 (CAAPGGK), Glu-163, Asp-194, and Asp-212 contribute to the S-adenosyl-L-methionine site. Residue Cys-266 is the Nucleophile of the active site.

This sequence belongs to the class I-like SAM-binding methyltransferase superfamily. RsmB/NOP family.

The protein resides in the mitochondrion matrix. It catalyses the reaction cytidine(34) in mitochondrial tRNA + S-adenosyl-L-methionine = 5-methylcytidine(34) in mitochondrial tRNA + S-adenosyl-L-homocysteine + H(+). Mitochondrial tRNA methyltransferase that mediates methylation of cytosine to 5-methylcytosine (m5C) at position 34 of mt-tRNA(Met). mt-tRNA(Met) methylation at cytosine(34) takes place at the wobble position of the anticodon and initiates the formation of 5-formylcytosine (f(5)c) at this position. mt-tRNA(Met) containing the f(5)c modification at the wobble position enables recognition of the AUA codon in addition to the AUG codon, expanding codon recognition in mitochondrial translation. This is tRNA (cytosine(34)-C(5))-methyltransferase, mitochondrial from Bos taurus (Bovine).